The following is a 226-amino-acid chain: Beta-phosphoglucomutase (226 aa).

Asp-7 acts as the Nucleophile in catalysis. Asp-7 and Asp-9 together coordinate Mg(2+). Asp-7 is subject to 4-aspartylphosphate. Asp-9 acts as the Proton donor/acceptor in catalysis. The beta-D-glucose 6-phosphate site is built by Asp-9, Gly-44, Ile-45, Arg-47, Ser-116, Arg-117, and Asn-118. Position 170 (Asp-170) interacts with Mg(2+).

This sequence belongs to the HAD-like hydrolase superfamily. CbbY/CbbZ/Gph/YieH family. Homodimer. It depends on Mg(2+) as a cofactor. Post-translationally, autophosphorylated.

It is found in the cytoplasm. It catalyses the reaction beta-D-glucose 1-phosphate = beta-D-glucose 6-phosphate. In terms of biological role, catalyzes the interconversion of D-glucose 1-phosphate (G1P) and D-glucose 6-phosphate (G6P), forming beta-D-glucose 1,6-(bis)phosphate (beta-G16P) as an intermediate. The chain is Beta-phosphoglucomutase (yvdM) from Bacillus subtilis (strain 168).